The primary structure comprises 78 residues: Translation initiation factor IF-1 (78 aa).

The S1-like domain occupies methionine 1–isoleucine 72.

Belongs to the IF-1 family. Component of the 30S ribosomal translation pre-initiation complex which assembles on the 30S ribosome in the order IF-2 and IF-3, IF-1 and N-formylmethionyl-tRNA(fMet); mRNA recruitment can occur at any time during PIC assembly.

It localises to the cytoplasm. Functionally, one of the essential components for the initiation of protein synthesis. Stabilizes the binding of IF-2 and IF-3 on the 30S subunit to which N-formylmethionyl-tRNA(fMet) subsequently binds. Helps modulate mRNA selection, yielding the 30S pre-initiation complex (PIC). Upon addition of the 50S ribosomal subunit IF-1, IF-2 and IF-3 are released leaving the mature 70S translation initiation complex. This is Translation initiation factor IF-1 from Mesoplasma florum (strain ATCC 33453 / NBRC 100688 / NCTC 11704 / L1) (Acholeplasma florum).